The sequence spans 1575 residues: Lysophospholipase NTE1 (1575 aa).

The segment at 1–56 (MNLTTTMPAAVAPDPPAQLAVSSRSLSDSSDAAGASRTSSSCRASSPSHCPTHAWN) is disordered. Residues 1-99 (MNLTTTMPAA…TLSPPNLLQG (99 aa)) lie on the Cytoplasmic side of the membrane. A compositionally biased stretch (low complexity) spans 19–48 (LAVSSRSLSDSSDAAGASRTSSSCRASSPS). The chain crosses the membrane as a helical span at residues 100 to 120 (IVSQLAMASYIGRLLLYLFQV). Residues 121–151 (VPSLLYWAITFTTITVPTALFTLFSMSLTFT) are Lumenal-facing. The helical transmembrane segment at 152-172 (MNFTTLLIIVLLLVSTVSWFI) threads the bilayer. Over 173-1575 (RYRFLNIYSR…RTMAPRRASI (1403 aa)) the chain is Cytoplasmic. Disordered stretches follow at residues 339-425 (DMES…AKSV) and 568-587 (GSAS…VSPG). The segment covering 409 to 424 (RGHRRKRPSRPKRAKS) has biased composition (basic residues). Residues 737-856 (GGTS…TSYR) and 894-1014 (RLTT…IAQR) contribute to the a nucleoside 3',5'-cyclic phosphate site. The PNPLA domain occupies 1272-1436 (LVLGGGGARG…VDNLTVARMK (165 aa)). The GXGXXG motif lies at 1276 to 1281 (GGGARG). Positions 1303–1307 (GTSIG) match the GXSXG motif. Ser1305 serves as the catalytic Nucleophile. Catalysis depends on Asp1423, which acts as the Proton acceptor. A DGA/G motif is present at residues 1423-1425 (DGG).

The protein belongs to the NTE family.

The protein localises to the endoplasmic reticulum membrane. The enzyme catalyses a 1-acyl-sn-glycero-3-phosphocholine + H2O = sn-glycerol 3-phosphocholine + a fatty acid + H(+). Inhibited by organophosphorus esters. Functionally, intracellular phospholipase B that catalyzes the double deacylation of phosphatidylcholine (PC) to glycerophosphocholine (GroPCho). Plays an important role in membrane lipid homeostasis. Responsible for the rapid PC turnover in response to inositol, elevated temperatures, or when choline is present in the growth medium. The chain is Lysophospholipase NTE1 (NTE1) from Coccidioides immitis (strain RS) (Valley fever fungus).